Here is a 259-residue protein sequence, read N- to C-terminus: Proteasome subunit alpha (259 aa).

The protein belongs to the peptidase T1A family. As to quaternary structure, the 20S proteasome core is composed of 14 alpha and 14 beta subunits that assemble into four stacked heptameric rings, resulting in a barrel-shaped structure. The two inner rings, each composed of seven catalytic beta subunits, are sandwiched by two outer rings, each composed of seven alpha subunits. The catalytic chamber with the active sites is on the inside of the barrel. Has a gated structure, the ends of the cylinder being occluded by the N-termini of the alpha-subunits. Is capped at one or both ends by the proteasome regulatory ATPase, PAN.

The protein localises to the cytoplasm. The formation of the proteasomal ATPase PAN-20S proteasome complex, via the docking of the C-termini of PAN into the intersubunit pockets in the alpha-rings, triggers opening of the gate for substrate entry. Interconversion between the open-gate and close-gate conformations leads to a dynamic regulation of the 20S proteasome proteolysis activity. Component of the proteasome core, a large protease complex with broad specificity involved in protein degradation. This Methanococcus maripaludis (strain DSM 14266 / JCM 13030 / NBRC 101832 / S2 / LL) protein is Proteasome subunit alpha.